Here is a 307-residue protein sequence, read N- to C-terminus: Elongation factor Ts (307 aa).

Positions 79-82 (TDFV) are involved in Mg(2+) ion dislocation from EF-Tu.

The protein belongs to the EF-Ts family.

The protein localises to the cytoplasm. In terms of biological role, associates with the EF-Tu.GDP complex and induces the exchange of GDP to GTP. It remains bound to the aminoacyl-tRNA.EF-Tu.GTP complex up to the GTP hydrolysis stage on the ribosome. The chain is Elongation factor Ts (tsf) from Bartonella quintana (strain Toulouse) (Rochalimaea quintana).